Consider the following 121-residue polypeptide: UPF0102 protein BDI_2565 (121 aa).

It belongs to the UPF0102 family.

This Parabacteroides distasonis (strain ATCC 8503 / DSM 20701 / CIP 104284 / JCM 5825 / NCTC 11152) protein is UPF0102 protein BDI_2565.